A 380-amino-acid polypeptide reads, in one-letter code: Homoserine O-succinyltransferase (380 aa).

Residues Asn-49–Leu-357 form the AB hydrolase-1 domain. The active-site Nucleophile is Ser-155. Arg-225 serves as a coordination point for substrate. Active-site residues include Asp-320 and His-353. Residue Asp-354 coordinates substrate.

Belongs to the AB hydrolase superfamily. MetX family. Homodimer.

It localises to the cytoplasm. It catalyses the reaction L-homoserine + succinyl-CoA = O-succinyl-L-homoserine + CoA. The protein operates within amino-acid biosynthesis; L-methionine biosynthesis via de novo pathway; O-succinyl-L-homoserine from L-homoserine: step 1/1. Its function is as follows. Transfers a succinyl group from succinyl-CoA to L-homoserine, forming succinyl-L-homoserine. The sequence is that of Homoserine O-succinyltransferase from Laribacter hongkongensis (strain HLHK9).